We begin with the raw amino-acid sequence, 499 residues long: Proline dehydrogenase 1, mitochondrial (499 aa).

The N-terminal 72 residues, 1-72 (MATRLLRTNF…LDLSDQARLF (72 aa)), are a transit peptide targeting the mitochondrion.

Belongs to the proline oxidase family. It depends on FAD as a cofactor. As to expression, ubiquitous. Highest expression in pollen grains, in the stigma and in developing embryos.

The protein localises to the mitochondrion. The enzyme catalyses L-proline + a quinone = (S)-1-pyrroline-5-carboxylate + a quinol + H(+). The protein operates within amino-acid degradation; L-proline degradation into L-glutamate; L-glutamate from L-proline: step 1/2. Its function is as follows. Converts proline to delta-1-pyrroline-5-carboxylate. This Arabidopsis thaliana (Mouse-ear cress) protein is Proline dehydrogenase 1, mitochondrial (POX1).